The chain runs to 40 residues: Potassium channel toxin alpha-KTx 12.2 (40 aa).

Disulfide bonds link Cys2–Cys5, Cys10–Cys31, Cys16–Cys36, and Cys20–Cys38.

The protein belongs to the short scorpion toxin superfamily. Potassium channel inhibitor family. Alpha-KTx 12 subfamily. Expressed by the venom gland.

It is found in the secreted. In terms of biological role, inhibits high conductance calcium-activated potassium channels. Reversibly inhibits Shaker B potassium channels. The polypeptide is Potassium channel toxin alpha-KTx 12.2 (Tityus trivittatus (Argentinean scorpion)).